Reading from the N-terminus, the 676-residue chain is Lutropin-choriogonadotropic hormone receptor (676 aa).

The N-terminal stretch at 1–29 (MKQPLLALQLLKLLLLLLLPLPPLPRALR) is a signal peptide. Residues 30–340 (EARCCPEPCN…EDIMGYDFLR (311 aa)) lie on the Extracellular side of the membrane. An N-linked (GlcNAc...) asparagine glycan is attached at Asn-103. LRR repeat units follow at residues 126–151 (LPRLKYLSICNTGIRKFPDVTKIFSS), 153–175 (TNFILEICDNLHITTIPGNAFQG), 176–200 (MNNESITLKLYGNGFEEVQSHAFNG), 201–224 (TTVISLVLKENVHLERIHNGAFRG), and 225–248 (ATGPSILDISSTKLQALPSHGLES). Asn-178 and Asn-199 each carry an N-linked (GlcNAc...) asparagine glycan. Tyr-308 carries the sulfotyrosine modification. The helical transmembrane segment at 341-362 (VLIWLINILAIMGNMTVLFVLL) threads the bilayer. Residues 363 to 372 (TSRYKLTVPR) lie on the Cytoplasmic side of the membrane. A helical transmembrane segment spans residues 373–393 (FLMCNLSFADFCMGLYLLLIA). Over 394–416 (SVDSQTKGQYYNHAIDWQTGSGC) the chain is Extracellular. The cysteines at positions 416 and 491 are disulfide-linked. Residues 417–439 (NTAGFFTVFASELSVYTLTVITL) form a helical membrane-spanning segment. Topologically, residues 440–459 (ERWHTITYAIHLDQKLRLRH) are cytoplasmic. A helical transmembrane segment spans residues 460–482 (AILIMLGGWLFSSLIAMLPLVGV). The Extracellular segment spans residues 483-502 (SNYMKVSICFPMDVETTLSQ). A helical membrane pass occupies residues 503–526 (IYILTILILNVVAFIIICACYIKI). At 527-547 (YFAVRNPELMATNKDTKIAKK) the chain is on the cytoplasmic side. The chain crosses the membrane as a helical span at residues 548–571 (MAILIFTDFTCMAPISFFAISAAF). Over 572 to 582 (KMPLITVTNSK) the chain is Extracellular. Residues 583–604 (VLLVLFYPINSCANPFLYAIFT) form a helical membrane-spanning segment. The Cytoplasmic segment spans residues 605 to 676 (KTFRRDFFLL…LLDKTCYKEY (72 aa)). Residues Cys-620 and Cys-621 are each lipidated (S-palmitoyl cysteine).

Belongs to the G-protein coupled receptor 1 family. FSH/LSH/TSH subfamily. Post-translationally, sulfated.

It localises to the cell membrane. Receptor for lutropin-choriogonadotropic hormone. The activity of this receptor is mediated by G proteins which activate adenylate cyclase. The chain is Lutropin-choriogonadotropic hormone receptor (LHCGR) from Callithrix jacchus (White-tufted-ear marmoset).